We begin with the raw amino-acid sequence, 434 residues long: Phosphomethylpyrimidine synthase (434 aa).

Residues N74, M103, Y132, H171, 193-195, 234-237, and E273 contribute to the substrate site; these read SRG and DGIR. Position 277 (H277) interacts with Zn(2+). Residue Y300 participates in substrate binding. A Zn(2+)-binding site is contributed by H341. [4Fe-4S] cluster contacts are provided by C417, C420, and C424.

It belongs to the ThiC family. As to quaternary structure, homodimer. [4Fe-4S] cluster serves as cofactor.

It carries out the reaction 5-amino-1-(5-phospho-beta-D-ribosyl)imidazole + S-adenosyl-L-methionine = 4-amino-2-methyl-5-(phosphooxymethyl)pyrimidine + CO + 5'-deoxyadenosine + formate + L-methionine + 3 H(+). Its pathway is cofactor biosynthesis; thiamine diphosphate biosynthesis. Catalyzes the synthesis of the hydroxymethylpyrimidine phosphate (HMP-P) moiety of thiamine from aminoimidazole ribotide (AIR) in a radical S-adenosyl-L-methionine (SAM)-dependent reaction. This chain is Phosphomethylpyrimidine synthase, found in Desulfotalea psychrophila (strain LSv54 / DSM 12343).